The sequence spans 240 residues: MRRCSLCAFDAARGPRRLMRVGLALILVGHVNLLLGAVLHGTVLRHVANPRGAVTPEYTVANVISVGSGLLSVSVGLVALLASRNLLRPPLHWVLLALALVNLLLSVACSLGLLLAVSLTVANGGRRLIADCHPGLLDPLVPLDEGPGHTDCPFDPTRIYDTALALWIPSLLMSAGEAALSGYCCVAALTLRGVGPCRKDGLQGQLEEMTELESPKCKRQENEQLLDQNQEIRASQRSWV.

4 consecutive transmembrane segments (helical) span residues 21-41 (VGLALILVGHVNLLLGAVLHG), 63-83 (VISVGSGLLSVSVGLVALLAS), 94-114 (VLLALALVNLLLSVACSLGLL), and 163-183 (ALALWIPSLLMSAGEAALSGY).

It belongs to the TMEM54 family. Expressed in skin, pancreas and keratinocytes.

It localises to the membrane. This is Keratinocyte-associated protein 3 (KRTCAP3) from Homo sapiens (Human).